A 977-amino-acid polypeptide reads, in one-letter code: Zinc finger CCCH domain-containing protein 7B (977 aa).

TPR repeat units follow at residues 1-27 (MERQKRKADIEKGLQFIQSTLPLKQEE), 36-69 (VQNLFAEGNDLFREKDYKQALVQYMEGLNVADYA), and 82-115 (CKLHVNRAACYFTMGLYEKALEDSEKALGLDSES). The residue at position 217 (Ser217) is a Phosphoserine. The short motif at 248 to 256 (STDSLDDFS) is the LD motif; interaction with NSP3 element. Phosphoserine is present on residues Ser364 and Ser367. The disordered stretch occupies residues 365–403 (FGSTRGSLDKPDSFMEETNSQDHRPPSGAQKPAPSPEPC). C3H1-type zinc fingers lie at residues 484 to 508 (LCKDMINKQDCKYGDNCTFAYHQEE), 616 to 638 (VCRHEVRYGCLREDSCHFAHSFI), and 754 to 782 (PQQYDLCIHAQNGRKCQYVGNCSFAHSPE). The C2H2-type zinc-finger motif lies at 842-866 (YHCWLCGKNSNSKKQWQQHIQSEKH). The C3H1-type 4 zinc-finger motif lies at 886–914 (MGEFRLCDRLQKGKACPDGDKCRCAHGQE).

(Microbial infection) Interacts (via LD motif) with rotavirus A NSP3 (via the coiled-coil region).

It localises to the nucleus. Its function is as follows. May be a specific regulator of miRNA biogenesis. Binds to microRNAs MIR7-1, MIR16-2 and MIR29A hairpins recognizing the 'ATA(A/T)' motif in the apical loop. This chain is Zinc finger CCCH domain-containing protein 7B (ZC3H7B), found in Homo sapiens (Human).